A 386-amino-acid chain; its full sequence is Bifunctional enzyme IspD/IspF (386 aa).

Residues 1–230 form a 2-C-methyl-D-erythritol 4-phosphate cytidylyltransferase region; that stretch reads MIRDERVAAI…RARSILEAPV (230 aa). Residues 231–386 are 2-C-methyl-D-erythritol 2,4-cyclodiphosphate synthase; that stretch reads AMGVGYDTHR…HAVALLVRVR (156 aa). Positions 237 and 239 each coordinate a divalent metal cation. Residues 237-239 and 262-263 each bind 4-CDP-2-C-methyl-D-erythritol 2-phosphate; these read DTH and HS. A divalent metal cation is bound at residue His270. Residues 284 to 286, 289 to 293, 360 to 363, Phe367, and Arg370 contribute to the 4-CDP-2-C-methyl-D-erythritol 2-phosphate site; these read DLG, FPDTD, and TTGE.

This sequence in the N-terminal section; belongs to the IspD/TarI cytidylyltransferase family. IspD subfamily. The protein in the C-terminal section; belongs to the IspF family. It depends on a divalent metal cation as a cofactor.

The enzyme catalyses 2-C-methyl-D-erythritol 4-phosphate + CTP + H(+) = 4-CDP-2-C-methyl-D-erythritol + diphosphate. It catalyses the reaction 4-CDP-2-C-methyl-D-erythritol 2-phosphate = 2-C-methyl-D-erythritol 2,4-cyclic diphosphate + CMP. Its pathway is isoprenoid biosynthesis; isopentenyl diphosphate biosynthesis via DXP pathway; isopentenyl diphosphate from 1-deoxy-D-xylulose 5-phosphate: step 2/6. The protein operates within isoprenoid biosynthesis; isopentenyl diphosphate biosynthesis via DXP pathway; isopentenyl diphosphate from 1-deoxy-D-xylulose 5-phosphate: step 4/6. Its function is as follows. Bifunctional enzyme that catalyzes the formation of 4-diphosphocytidyl-2-C-methyl-D-erythritol from CTP and 2-C-methyl-D-erythritol 4-phosphate (MEP) (IspD), and catalyzes the conversion of 4-diphosphocytidyl-2-C-methyl-D-erythritol 2-phosphate (CDP-ME2P) to 2-C-methyl-D-erythritol 2,4-cyclodiphosphate (ME-CPP) with a corresponding release of cytidine 5-monophosphate (CMP) (IspF). This chain is Bifunctional enzyme IspD/IspF, found in Anaeromyxobacter sp. (strain Fw109-5).